The primary structure comprises 338 residues: UbiA prenyltransferase domain-containing protein 1 (338 aa).

An N-acetylalanine modification is found at A2. Transmembrane regions (helical) follow at residues 83–103 (LLVG…LVNT), 134–154 (FGVF…YLSP), 160–180 (LALI…GIGF), 188–208 (LIIL…IQVG), 209–229 (SLAI…EAIL), 245–267 (IVTL…LLFL), 277–297 (THCT…FSLE), and 315–335 (LNLL…AGSL).

Belongs to the UbiA prenyltransferase family. As to quaternary structure, interacts with HMGCR and SOAT1. In terms of tissue distribution, ubiquitously expressed.

It localises to the endoplasmic reticulum membrane. Its subcellular location is the golgi apparatus membrane. The protein resides in the mitochondrion membrane. It is found in the cytoplasm. The protein localises to the nucleus. The enzyme catalyses menadiol + (2E,6E,10E)-geranylgeranyl diphosphate = menaquinol-4 + diphosphate. It catalyses the reaction all-trans-decaprenyl diphosphate + 4-hydroxybenzoate = 4-hydroxy-3-(all-trans-decaprenyl)benzoate + diphosphate. The protein operates within quinol/quinone metabolism; menaquinone biosynthesis. It functions in the pathway cofactor biosynthesis; ubiquinone biosynthesis. In terms of biological role, prenyltransferase that mediates the formation of menaquinone-4 (MK-4) and coenzyme Q10. MK-4 is a vitamin K2 isoform present at high concentrations in the brain, kidney and pancreas, and is required for endothelial cell development. Mediates the conversion of phylloquinone (PK) into MK-4, probably by cleaving the side chain of phylloquinone (PK) to release 2-methyl-1,4-naphthoquinone (menadione; K3) and then prenylating it with geranylgeranyl pyrophosphate (GGPP) to form MK-4. Also plays a role in cardiovascular development independently of MK-4 biosynthesis, by acting as a coenzyme Q10 biosynthetic enzyme: coenzyme Q10, also named ubiquinone, plays an important antioxidant role in the cardiovascular system. Mediates biosynthesis of coenzyme Q10 in the Golgi membrane, leading to protect cardiovascular tissues from NOS3/eNOS-dependent oxidative stress. This Homo sapiens (Human) protein is UbiA prenyltransferase domain-containing protein 1.